A 400-amino-acid polypeptide reads, in one-letter code: NADPH dehydrogenase 1 (400 aa).

T38 and Q115 together coordinate FMN. Residues H192 and N195 each contribute to the substrate site. The Proton donor role is filled by Y197. 2 residues coordinate FMN: R244 and R349. Residue Y376 participates in substrate binding.

Homodimer or heterodimer. Requires FMN as cofactor.

The catalysed reaction is A + NADPH + H(+) = AH2 + NADP(+). Flavin-dependent enoate reductase that catalyzes the chemo- and stereoslective hydrogenation of electron-poor alkenes. The enzyme is reduced by NADPH, and oxygen, quinones, and alpha,beta-unsaturated aldehydes and ketones can act as electron acceptors to complete catalytic turnover. The physiological oxidant remains elusive. This is NADPH dehydrogenase 1 from Saccharomyces pastorianus (Lager yeast).